The primary structure comprises 141 residues: MMPLVPLLLVSIVFPGIQATQLTRCELTEKLKELDGYRDISMSEWICTLFHTSGLDTKITVNNNGSTEYGIFQISDKLWCVSKQNPQSKNICDTPCENFLDDNLTDDVKCAMKILDKEGIDHWLAHKPLCSENLEQWVCKK.

Positions 1–19 (MMPLVPLLLVSIVFPGIQA) are cleaved as a signal peptide. The C-type lysozyme domain maps to 20–141 (TQLTRCELTE…ENLEQWVCKK (122 aa)). 4 disulfides stabilise this stretch: Cys-25/Cys-139, Cys-47/Cys-130, Cys-80/Cys-96, and Cys-92/Cys-110. The N-linked (GlcNAc...) asparagine glycan is linked to Asn-64. Residues Asp-101, Asp-106, and Asp-107 each coordinate Ca(2+).

The protein belongs to the glycosyl hydrolase 22 family. Lactose synthase (LS) is a heterodimer of a catalytic component, beta1,4-galactosyltransferase (beta4Gal-T1) and a regulatory component, alpha-lactalbumin (LA). As to expression, mammary gland specific. Secreted in milk.

It is found in the secreted. Regulatory subunit of lactose synthase, changes the substrate specificity of galactosyltransferase in the mammary gland making glucose a good acceptor substrate for this enzyme. This enables LS to synthesize lactose, the major carbohydrate component of milk. In other tissues, galactosyltransferase transfers galactose onto the N-acetylglucosamine of the oligosaccharide chains in glycoproteins. In Oryctolagus cuniculus (Rabbit), this protein is Alpha-lactalbumin (LALBA).